A 329-amino-acid chain; its full sequence is Sideroflexin-1.1 (329 aa).

5 helical membrane passes run 100–122, 150–167, 178–198, 232–254, and 274–294; these read MPGNMVTTGMLLGLYRTLPGVVF, LFVSYCCATSGAMTVALG, LAARLVPFAAIALANAINIPM, VTLSRIAMAMPYMVMTPIIMNRI, and IQTLIAGIGLYFTTPLCCALF.

Belongs to the sideroflexin family.

It is found in the mitochondrion inner membrane. The enzyme catalyses L-serine(in) = L-serine(out). The catalysed reaction is L-alanine(in) = L-alanine(out). It catalyses the reaction L-cysteine(in) = L-cysteine(out). Amino acid transporter importing serine, an essential substrate of the mitochondrial branch of the one-carbon pathway, into mitochondria. Mitochondrial serine is then converted to glycine and formate, which exits to the cytosol where it is used to generate the charged folates that serve as one-carbon donors. May also transport other amino acids including alanine and cysteine. The polypeptide is Sideroflexin-1.1 (Caenorhabditis elegans).